A 386-amino-acid polypeptide reads, in one-letter code: Putative F-box/kelch-repeat protein At3g17280 (386 aa).

The region spanning 1 to 48 is the F-box domain; sequence MTTISDLPYDLLPEILSRLPTKSIPKLKTTCKKWYALFKDPKFVEKKL. Kelch repeat units follow at residues 155–203 and 340–386; these read SYKI…LKES and RIYI…IVEV.

The protein is Putative F-box/kelch-repeat protein At3g17280 of Arabidopsis thaliana (Mouse-ear cress).